The sequence spans 517 residues: Xaa-Pro dipeptidase (517 aa).

Residues D244, D255, H336, E381, and E420 each coordinate Mn(2+).

This sequence belongs to the peptidase M24B family. Bacterial-type prolidase subfamily. As to quaternary structure, monomer. Requires Mn(2+) as cofactor.

It carries out the reaction Xaa-L-Pro dipeptide + H2O = an L-alpha-amino acid + L-proline. It catalyses the reaction diisopropyl fluorophosphate + H2O = diisopropyl phosphate + fluoride + 2 H(+). The catalysed reaction is An aryl dialkyl phosphate + H2O = dialkyl phosphate + an aryl alcohol.. Its function is as follows. Splits dipeptides with a prolyl or hydroxyprolyl residue in the C-terminal position and a nonpolar amino acid at the N-terminal position. Also catalyzes the hydrolysis of toxic organophosphorus cholinesterase-inhibiting compounds including insecticide paraoxon and nerve gases such as diisopropylfluorophosphate (DFP), O-isopropyl methylphosphonofluoridate (sarin), O-pinacolyl methylphosphonofluoridate (soman), and O-cyclohexyl methylphosphonofluoridate. This Alteromonas sp protein is Xaa-Pro dipeptidase (pepQ).